We begin with the raw amino-acid sequence, 222 residues long: Cytochrome b6 (222 aa).

The chain crosses the membrane as a helical span at residues 39-59 (IFYCLGGITLVCFIIQFATGF). Cys42 serves as a coordination point for heme c. His93 and His107 together coordinate heme b. A run of 3 helical transmembrane segments spans residues 97–117 (ASMM…TGGF), 123–143 (LTWI…VTGY), and 193–213 (LHTF…FLMI). Residues His194 and His209 each coordinate heme b.

This sequence belongs to the cytochrome b family. PetB subfamily. In terms of assembly, the 4 large subunits of the cytochrome b6-f complex are cytochrome b6, subunit IV (17 kDa polypeptide, PetD), cytochrome f and the Rieske protein, while the 4 small subunits are PetG, PetL, PetM and PetN. The complex functions as a dimer. It depends on heme b as a cofactor. The cofactor is heme c.

It is found in the cellular thylakoid membrane. Its function is as follows. Component of the cytochrome b6-f complex, which mediates electron transfer between photosystem II (PSII) and photosystem I (PSI), cyclic electron flow around PSI, and state transitions. In Prochlorothrix hollandica, this protein is Cytochrome b6.